A 385-amino-acid chain; its full sequence is Acetate kinase (385 aa).

Residue Asn-9 participates in Mg(2+) binding. Lys-16 is a binding site for ATP. Arg-87 serves as a coordination point for substrate. Asp-144 functions as the Proton donor/acceptor in the catalytic mechanism. Residues 202-206 and 277-279 contribute to the ATP site; these read HLGSG and DMR. Glu-373 is a Mg(2+) binding site.

The protein belongs to the acetokinase family. In terms of assembly, homodimer. Mg(2+) serves as cofactor. Requires Mn(2+) as cofactor.

It localises to the cytoplasm. The enzyme catalyses acetate + ATP = acetyl phosphate + ADP. It functions in the pathway metabolic intermediate biosynthesis; acetyl-CoA biosynthesis; acetyl-CoA from acetate: step 1/2. Its function is as follows. Catalyzes the formation of acetyl phosphate from acetate and ATP. Can also catalyze the reverse reaction. The chain is Acetate kinase from Rickettsia prowazekii (strain Madrid E).